A 524-amino-acid chain; its full sequence is Bifunctional purine biosynthesis protein PurH (524 aa).

Residues 1–154 (MTRLALLSTS…KNHAHVTVLC (154 aa)) form the MGS-like domain.

Belongs to the PurH family.

The catalysed reaction is (6R)-10-formyltetrahydrofolate + 5-amino-1-(5-phospho-beta-D-ribosyl)imidazole-4-carboxamide = 5-formamido-1-(5-phospho-D-ribosyl)imidazole-4-carboxamide + (6S)-5,6,7,8-tetrahydrofolate. The enzyme catalyses IMP + H2O = 5-formamido-1-(5-phospho-D-ribosyl)imidazole-4-carboxamide. The protein operates within purine metabolism; IMP biosynthesis via de novo pathway; 5-formamido-1-(5-phospho-D-ribosyl)imidazole-4-carboxamide from 5-amino-1-(5-phospho-D-ribosyl)imidazole-4-carboxamide (10-formyl THF route): step 1/1. It participates in purine metabolism; IMP biosynthesis via de novo pathway; IMP from 5-formamido-1-(5-phospho-D-ribosyl)imidazole-4-carboxamide: step 1/1. The polypeptide is Bifunctional purine biosynthesis protein PurH (Acaryochloris marina (strain MBIC 11017)).